Consider the following 371-residue polypeptide: 4-hydroxyprotoasukamycin monooxygenase (371 aa).

Belongs to the bacterial luciferase oxidoreductase family. The cofactor is FMN.

It carries out the reaction 4-hydroxyprotoasukamycin + NADH + O2 + H(+) = asukamycin + NAD(+) + H2O. It functions in the pathway antibiotic biosynthesis. Its function is as follows. Involved in the biosynthesis of the antibiotic asukamycin. Catalyzes the epoxidation of 4-hydroxyprotoasukamycin to the final product, asukamycin. Can also convert some 4-hydroxyprotoasukamycin derivatives to their asukamycin derivatives, but cannot use protoasukamycin as substrate. Can also use NADPH, but catalytic efficiency is 20-fold higher with NADH. The chain is 4-hydroxyprotoasukamycin monooxygenase from Streptomyces nodosus subsp. asukaensis.